The chain runs to 131 residues: MNPPFAKVSWATVTLLLLLLLLPPAVLSPGAAAQPLPDCCRQKTCSCRLYELLHGAGNHAAGILTLGKRRPGPPGLQGRLQRLLQASGNHAAGILTMGRRAGAEPAPRLCPGRRCLAAAASSVAPGGRSGI.

Positions 1–33 are cleaved as a signal peptide; it reads MNPPFAKVSWATVTLLLLLLLLPPAVLSPGAAA. Gln34 is subject to Pyrrolidone carboxylic acid. Intrachain disulfides connect Cys39/Cys45 and Cys40/Cys47. At Leu66 the chain carries Leucine amide. Position 97 is a methionine amide (Met97). Residues 98–131 constitute a propeptide, removed in mature form; the sequence is GRRAGAEPAPRLCPGRRCLAAAASSVAPGGRSGI.

This sequence belongs to the orexin family. Post-translationally, specific enzymatic cleavages at paired basic residues yield the different active peptides.

The protein localises to the rough endoplasmic reticulum. The protein resides in the cytoplasmic vesicle. It is found in the synapse. Its function is as follows. Neuropeptides that play a significant role in the regulation of food intake and sleep-wakefulness, possibly by coordinating the complex behavioral and physiologic responses of these complementary homeostatic functions. A broader role in the homeostatic regulation of energy metabolism, autonomic function, hormonal balance and the regulation of body fluids, is also suggested. Binds to orexin receptors HCRTR1/OX1R and HCRTR2/OX2R with a high affinity. Stimulates food intake. Modulates pituitary luteinizing hormone secretion in an ovarian steroid-dependent manner. Functionally, binds to orexin receptor HCRTR2/OX2R only. Stimulates food intake. Modulates pituitary luteinizing hormone secretion in an ovarian steroid-dependent manner. In Sus scrofa (Pig), this protein is Hypocretin neuropeptide precursor (HCRT).